A 463-amino-acid chain; its full sequence is Fumarate hydratase class II (463 aa).

Substrate is bound by residues 97–99 (SGT), 128–131 (HPND), 138–140 (SSN), and Thr-186. The active-site Proton donor/acceptor is His-187. Ser-317 is a catalytic residue. Residues Ser-318 and 323–325 (KVN) contribute to the substrate site.

This sequence belongs to the class-II fumarase/aspartase family. Fumarase subfamily. As to quaternary structure, homotetramer.

It localises to the cytoplasm. It catalyses the reaction (S)-malate = fumarate + H2O. Its pathway is carbohydrate metabolism; tricarboxylic acid cycle; (S)-malate from fumarate: step 1/1. Functionally, involved in the TCA cycle. Catalyzes the stereospecific interconversion of fumarate to L-malate. This chain is Fumarate hydratase class II, found in Helicobacter pylori (strain J99 / ATCC 700824) (Campylobacter pylori J99).